The sequence spans 144 residues: Snaclec coagulation factor IX/factor X-binding protein subunit B1 (144 aa).

Residues 1–23 form the signal peptide; it reads MGRFIFVSFGLLVVFLSLSGTAA. 3 disulfides stabilise this stretch: Cys-25-Cys-36, Cys-53-Cys-142, and Cys-119-Cys-134. The C-type lectin domain occupies 32–143; it reads YEGHCYKPFN…CRMMANFVCE (112 aa).

Belongs to the snaclec family. As to quaternary structure, heterodimer of subunits A and B1; disulfide-linked. Expressed by the venom gland.

The protein resides in the secreted. Functionally, anticoagulant protein which binds to the gamma-carboxyglutamic acid-domain regions of factors IX (F9) and factor X (F10) in the presence of calcium with a 1 to 1 stoichiometry. The chain is Snaclec coagulation factor IX/factor X-binding protein subunit B1 from Trimeresurus stejnegeri (Chinese green tree viper).